Reading from the N-terminus, the 196-residue chain is Putative NADH dehydrogenase/NAD(P)H nitroreductase SCO5049 (196 aa).

It belongs to the nitroreductase family. HadB/RutE subfamily. Requires FMN as cofactor.

The chain is Putative NADH dehydrogenase/NAD(P)H nitroreductase SCO5049 from Streptomyces coelicolor (strain ATCC BAA-471 / A3(2) / M145).